A 415-amino-acid chain; its full sequence is Serine/threonine transporter SstT (415 aa).

8 consecutive transmembrane segments (helical) span residues 21–41, 45–65, 85–105, 142–162, 193–213, 217–237, 289–309, and 331–351; these read ILLG…AALA, LGTL…LVLV, FLYL…SVLF, ALLN…GIAF, LGIF…ALWG, LLMV…PLIV, VAIP…ITVL, and VVAS…LLLI.

The protein belongs to the dicarboxylate/amino acid:cation symporter (DAACS) (TC 2.A.23) family.

It localises to the cell inner membrane. It carries out the reaction L-serine(in) + Na(+)(in) = L-serine(out) + Na(+)(out). It catalyses the reaction L-threonine(in) + Na(+)(in) = L-threonine(out) + Na(+)(out). Its function is as follows. Involved in the import of serine and threonine into the cell, with the concomitant import of sodium (symport system). The sequence is that of Serine/threonine transporter SstT from Pectobacterium atrosepticum (strain SCRI 1043 / ATCC BAA-672) (Erwinia carotovora subsp. atroseptica).